A 595-amino-acid chain; its full sequence is Laccase-18 (595 aa).

The N-terminal stretch at 1–29 (MEKLSTAASLFCVVVAATALAMAVVGGEA) is a signal peptide. Plastocyanin-like domains follow at residues 37–153 (MVHE…PRNG) and 162–316 (KDVP…YAGA). N-linked (GlcNAc...) asparagine glycans are attached at residues N42 and N48. The Cu cation site is built by H87 and H89. A glycan (N-linked (GlcNAc...) asparagine) is linked at N121. 2 residues coordinate Cu cation: H132 and H134. N-linked (GlcNAc...) asparagine glycans are attached at residues N206, N345, N382, N402, N409, N439, and N470. Residues 429 to 571 (DFPVRPPRPF…ATAFIVEDGP (143 aa)) enclose the Plastocyanin-like 3 domain. Positions 488, 491, 493, 550, 551, 552, 556, and 561 each coordinate Cu cation. The tract at residues 570–595 (GPTPETSLPPPPPEFKRCGTNGLSQP) is disordered.

This sequence belongs to the multicopper oxidase family. Cu cation is required as a cofactor.

It localises to the secreted. The protein resides in the extracellular space. Its subcellular location is the apoplast. It carries out the reaction 4 hydroquinone + O2 = 4 benzosemiquinone + 2 H2O. Lignin degradation and detoxification of lignin-derived products. In Oryza sativa subsp. japonica (Rice), this protein is Laccase-18 (LAC18).